The sequence spans 210 residues: Mating-type-like protein A1 (210 aa).

The homeobox DNA-binding region spans 141-200 (SKKKRQRLDNSTKEFLEKVFEKNKQPNRRERELIAEKHGVSLSQIRVWFTNKRMRKKEPK).

It belongs to the MATA1 family. Forms a heterodimer with ALPHA2.

The protein localises to the nucleus. Mating type proteins are sequence specific DNA-binding proteins that act as master switches in yeast differentiation by controlling gene expression in a cell type-specific fashion. Transcriptional corepressor that acts in conjunction with ALPHA2 to repress transcription both of homozygote-specific genes and of genes necessary for the white-opaque switch, a prerequisite for mating. The protein is Mating-type-like protein A1 (MTLA1) of Candida albicans (strain SC5314 / ATCC MYA-2876) (Yeast).